A 319-amino-acid polypeptide reads, in one-letter code: tRNA pseudouridine synthase B (319 aa).

The active-site Nucleophile is the Asp-49.

This sequence belongs to the pseudouridine synthase TruB family. Type 1 subfamily.

It carries out the reaction uridine(55) in tRNA = pseudouridine(55) in tRNA. Its function is as follows. Responsible for synthesis of pseudouridine from uracil-55 in the psi GC loop of transfer RNAs. In Aeromonas salmonicida (strain A449), this protein is tRNA pseudouridine synthase B.